Reading from the N-terminus, the 321-residue chain is Protease HtpX homolog (321 aa).

2 helical membrane passes run 6-26 and 28-48; these read TAML…LIGG and GGMM…YWNS. Residue His-130 coordinates Zn(2+). Glu-131 is an active-site residue. A Zn(2+)-binding site is contributed by His-134. Transmembrane regions (helical) follow at residues 145 to 165 and 173 to 193; these read ITAT…FFGG and PLGF…AMLV. Glu-202 contributes to the Zn(2+) binding site. The tract at residues 281–321 is disordered; the sequence is EFSPRASTPPPSGDRPVRKSGSVPTTGWRRGNENERKGPWS. Positions 310–321 are enriched in basic and acidic residues; it reads RGNENERKGPWS.

Belongs to the peptidase M48B family. The cofactor is Zn(2+).

The protein localises to the cell inner membrane. The sequence is that of Protease HtpX homolog from Agrobacterium fabrum (strain C58 / ATCC 33970) (Agrobacterium tumefaciens (strain C58)).